The primary structure comprises 81 residues: Photosystem I iron-sulfur center (81 aa).

4Fe-4S ferredoxin-type domains follow at residues 2-31 and 39-68; these read AHTV…MVPW and IASA…IRVY. [4Fe-4S] cluster contacts are provided by Cys-11, Cys-14, Cys-17, Cys-21, Cys-48, Cys-51, Cys-54, and Cys-58.

In terms of assembly, the eukaryotic PSI reaction center is composed of at least 11 subunits. It depends on [4Fe-4S] cluster as a cofactor.

The protein localises to the plastid. The protein resides in the cyanelle thylakoid membrane. The enzyme catalyses reduced [plastocyanin] + hnu + oxidized [2Fe-2S]-[ferredoxin] = oxidized [plastocyanin] + reduced [2Fe-2S]-[ferredoxin]. In terms of biological role, apoprotein for the two 4Fe-4S centers FA and FB of photosystem I (PSI); essential for photochemical activity. FB is the terminal electron acceptor of PSI, donating electrons to ferredoxin. The C-terminus interacts with PsaA/B/D and helps assemble the protein into the PSI complex. Required for binding of PsaD and PsaE to PSI. PSI is a cytochrome c6-ferredoxin oxidoreductase, converting photonic excitation into a charge separation, which transfers an electron from the donor P700 chlorophyll pair to the spectroscopically characterized acceptors A0, A1, FX, FA and FB in turn. This chain is Photosystem I iron-sulfur center, found in Cyanophora paradoxa.